Consider the following 404-residue polypeptide: uncharacterized protein (404 aa).

Residues 1–22 are compositionally biased toward polar residues; that stretch reads MASSINNSSQPTVPSISNNSHG. Positions 1 to 110 are disordered; it reads MASSINNSSQ…QQTPVKRRRR (110 aa). A Phosphothreonine modification is found at Thr-47. Polar residues predominate over residues 87 to 104; that stretch reads SRGSSLKSHLETESQQTP. The PHD-type zinc-finger motif lies at 117–166; it reads VDYCSACGGRGLFICCEGCPCSFHLSCLEPPLTPENIPEGSWFCVTCSIK.

This is an uncharacterized protein from Schizosaccharomyces pombe (strain 972 / ATCC 24843) (Fission yeast).